Here is a 183-residue protein sequence, read N- to C-terminus: Inosine/xanthosine triphosphatase (183 aa).

Asp75 is a binding site for Mg(2+). 75–76 (DG) contributes to the substrate binding site.

Belongs to the YjjX NTPase family. Homodimer. It depends on Mg(2+) as a cofactor. Mn(2+) is required as a cofactor.

It carries out the reaction XTP + H2O = XDP + phosphate + H(+). The catalysed reaction is ITP + H2O = IDP + phosphate + H(+). Phosphatase that hydrolyzes non-canonical purine nucleotides such as XTP and ITP to their respective diphosphate derivatives. Probably excludes non-canonical purines from DNA/RNA precursor pool, thus preventing their incorporation into DNA/RNA and avoiding chromosomal lesions. In Vibrio vulnificus (strain YJ016), this protein is Inosine/xanthosine triphosphatase.